A 279-amino-acid polypeptide reads, in one-letter code: Phosphatidylglycerol--prolipoprotein diacylglyceryl transferase (279 aa).

A run of 3 helical transmembrane segments spans residues 22-42, 52-72, and 89-109; these read WYGI…QAAL, LIDI…IYFV, and IWHG…SGII. Residue Arg-137 coordinates a 1,2-diacyl-sn-glycero-3-phospho-(1'-sn-glycerol). Transmembrane regions (helical) follow at residues 203–223 and 235–255; these read LGET…FVEA and IRVA…FVIY.

This sequence belongs to the Lgt family.

The protein resides in the cell membrane. It catalyses the reaction L-cysteinyl-[prolipoprotein] + a 1,2-diacyl-sn-glycero-3-phospho-(1'-sn-glycerol) = an S-1,2-diacyl-sn-glyceryl-L-cysteinyl-[prolipoprotein] + sn-glycerol 1-phosphate + H(+). Its pathway is protein modification; lipoprotein biosynthesis (diacylglyceryl transfer). Functionally, catalyzes the transfer of the diacylglyceryl group from phosphatidylglycerol to the sulfhydryl group of the N-terminal cysteine of a prolipoprotein, the first step in the formation of mature lipoproteins. The chain is Phosphatidylglycerol--prolipoprotein diacylglyceryl transferase from Staphylococcus epidermidis (strain ATCC 12228 / FDA PCI 1200).